Consider the following 450-residue polypeptide: Probable malate:quinone oxidoreductase (450 aa).

This sequence belongs to the MQO family. It depends on FAD as a cofactor.

The catalysed reaction is (S)-malate + a quinone = a quinol + oxaloacetate. The protein operates within carbohydrate metabolism; tricarboxylic acid cycle; oxaloacetate from (S)-malate (quinone route): step 1/1. The protein is Probable malate:quinone oxidoreductase of Helicobacter acinonychis (strain Sheeba).